The primary structure comprises 412 residues: Class E basic helix-loop-helix protein 40 (412 aa).

Positions 1–21 are disordered; sequence MERIPSAQPPPTCLPKAPGLE. The interval 1–139 is essential for interaction with BMAL1, E-box binding and repressor activity against the CLOCK-BMAL1 heterodimer; that stretch reads MERIPSAQPP…LSGRNVEAGQ (139 aa). The bHLH domain occupies 52–107; the sequence is TYKLPHRLIEKKRRDRINECIAQLKDLLPEHLKLTTLGHLEKAVVLELTLKHVKAL. Residues 75 to 79 are necessary for interaction with RXRA and repressor activity against RXRA; sequence LKDLL. Residues 142–175 form the Orange domain; it reads FCSGFQTCAREVLQYLAKHENTRDLKSSQLVTHL. A Glycyl lysine isopeptide (Lys-Gly) (interchain with G-Cter in SUMO1, SUMO2 and SUMO3) cross-link involves residue lysine 159. Residue lysine 167 forms a Glycyl lysine isopeptide (Lys-Gly) (interchain with G-Cter in SUMO2) linkage. Disordered stretches follow at residues 182-256 and 279-298; these read LLQG…ELRV and KQES…SDDE. Serine 235 carries the post-translational modification Phosphoserine. Lysine 279 participates in a covalent cross-link: Glycyl lysine isopeptide (Lys-Gly) (interchain with G-Cter in SUMO1); alternate. Residue lysine 279 forms a Glycyl lysine isopeptide (Lys-Gly) (interchain with G-Cter in SUMO1, SUMO2 and SUMO3); alternate linkage. Residue lysine 279 forms a Glycyl lysine isopeptide (Lys-Gly) (interchain with G-Cter in SUMO2); alternate linkage. Lysine 288 participates in a covalent cross-link: Glycyl lysine isopeptide (Lys-Gly) (interchain with G-Cter in SUMO2). The residue at position 383 (serine 383) is a Phosphoserine.

Homodimer. Heterodimer with BHLHE41/DEC2. Interacts with TCF3/E47. Interacts with ubiquitin-conjugating enzyme UBE2I/UBC9. Interacts with HDAC1, SUMO1, RXRA and BMAL1. Ubiquitinated; which may lead to proteasomal degradation. In terms of processing, sumoylation inhibits its ubiquitination and promotes its negative regulation of the CLOCK-BMAL1 heterodimer transcriptional activator activity.

It localises to the cytoplasm. It is found in the nucleus. Its function is as follows. Transcriptional repressor involved in the regulation of the circadian rhythm by negatively regulating the activity of the clock genes and clock-controlled genes. Acts as the negative limb of a novel autoregulatory feedback loop (DEC loop) which differs from the one formed by the PER and CRY transcriptional repressors (PER/CRY loop). Both these loops are interlocked as it represses the expression of PER1/2 and in turn is repressed by PER1/2 and CRY1/2. Represses the activity of the circadian transcriptional activator: CLOCK-BMAL1|BMAL2 heterodimer by competing for the binding to E-box elements (5'-CACGTG-3') found within the promoters of its target genes. Negatively regulates its own expression and the expression of DBP and BHLHE41/DEC2. Acts as a corepressor of RXR and the RXR-LXR heterodimers and represses the ligand-induced RXRA and NR1H3/LXRA transactivation activity. May be involved in the regulation of chondrocyte differentiation via the cAMP pathway. Represses the transcription of NR0B2 and attentuates the transactivation of NR0B2 by the CLOCK-BMAL1 complex. Drives the circadian rhythm of blood pressure through transcriptional repression of ATP1B1 in the cardiovascular system. This is Class E basic helix-loop-helix protein 40 (BHLHE40) from Bos taurus (Bovine).